A 1182-amino-acid chain; its full sequence is Rho GTPase-activating protein 20 (1182 aa).

The interval 1–40 (MEAMSPQQDALGAQPGRSSSLTGMSRIAGGPGTKKKMKTL) is disordered. Serine 46 bears the Phosphoserine mark. Residues 85 to 185 (TLLIDGPVEL…WLSLLQRYIA (101 aa)) enclose the PH domain. The 90-residue stretch at 194-283 (KSIPLKIFAK…TALLTQGSRD (90 aa)) folds into the Ras-associating domain. The region spanning 365 to 551 (VSLPDLCEND…FLIENCCRVF (187 aa)) is the Rho-GAP domain. Phosphoserine occurs at positions 704 and 730. Disordered stretches follow at residues 745 to 772 (QTQP…KRNT), 803 to 839 (VASY…QKSS), 935 to 955 (SYSS…SSQD), 982 to 1011 (TQRK…GQAS), 1074 to 1101 (LPSC…EGPG), and 1142 to 1182 (SGGQ…GTDI). A compositionally biased stretch (polar residues) spans 758–772 (KQSSVTGTDVSKRNT). A compositionally biased stretch (basic and acidic residues) spans 811-824 (SQDHPRKQAFDADP).

GTPase activator for the Rho-type GTPases by converting them to an inactive GDP-bound state. In Mus musculus (Mouse), this protein is Rho GTPase-activating protein 20 (Arhgap20).